The primary structure comprises 174 residues: von Hippel-Lindau tumor suppressor homolog (174 aa).

Belongs to the VHL family. Interacts with hif-1 (hydroxylated on 'Pro-621'); the interaction induces hif-1 degradation. May be a component of the cullin E3 ubiquitin ligase complex.

The protein operates within protein modification; protein ubiquitination. Involved in the response to variation in environmental oxygen levels by targeting the hypoxia-inducible transcription factor hif-1 for proteasomal degradation when oxygen levels are normal (around 20%). By regulating hif-1 expression, plays a role in iron homeostasis, aging, heat acclimation and progeny size. Mediates resistance to enteropathogenic E.coli. Mediates susceptibility to B.thuringiensis pore-forming toxins. Not involved in P.aeruginosa susceptibility. The chain is von Hippel-Lindau tumor suppressor homolog from Caenorhabditis elegans.